Reading from the N-terminus, the 307-residue chain is Ribonuclease Z (307 aa).

Zn(2+)-binding residues include His-63, His-65, Asp-67, His-68, His-141, Asp-212, and His-270. The Proton acceptor role is filled by Asp-67.

The protein belongs to the RNase Z family. In terms of assembly, homodimer. The cofactor is Zn(2+).

The catalysed reaction is Endonucleolytic cleavage of RNA, removing extra 3' nucleotides from tRNA precursor, generating 3' termini of tRNAs. A 3'-hydroxy group is left at the tRNA terminus and a 5'-phosphoryl group is left at the trailer molecule.. Zinc phosphodiesterase, which displays some tRNA 3'-processing endonuclease activity. Probably involved in tRNA maturation, by removing a 3'-trailer from precursor tRNA. This chain is Ribonuclease Z, found in Bacillus cereus (strain B4264).